A 115-amino-acid chain; its full sequence is MRVGCDIIAISRIEKIHSRHGKNFLDKFLSPKEQILIKNPATLAGLWAAKEAASKALGVGICELCSFFDIEISKDEKNAPKLKYSQKITKNFNITQTSLSISHDNGFAIAIVAIV.

2 residues coordinate Mg(2+): D6 and E51.

Belongs to the P-Pant transferase superfamily. AcpS family. Requires Mg(2+) as cofactor.

The protein localises to the cytoplasm. The enzyme catalyses apo-[ACP] + CoA = holo-[ACP] + adenosine 3',5'-bisphosphate + H(+). Transfers the 4'-phosphopantetheine moiety from coenzyme A to a Ser of acyl-carrier-protein. The polypeptide is Holo-[acyl-carrier-protein] synthase (Campylobacter jejuni subsp. jejuni serotype O:6 (strain 81116 / NCTC 11828)).